Here is a 631-residue protein sequence, read N- to C-terminus: ATP-dependent DNA helicase 2 subunit 1 (631 aa).

One can recognise a Ku domain in the interval 262–487; it reads FYLGPNLSMS…VEFFQKIIKK (226 aa). Residues 550–570 form a disordered region; the sequence is AEPHKKRAAKSTTAGASGPKM.

This sequence belongs to the ku70 family. Heterodimer of a 70 kDa and a 80 kDa subunit.

It is found in the nucleus. It localises to the chromosome. It carries out the reaction ATP + H2O = ADP + phosphate + H(+). Functionally, single-stranded DNA-dependent ATP-dependent helicase. Involved in non-homologous end joining (NHEJ) DNA double strand break repair. Sequence-specific DNA-binding protein that has a high affinity for a 31 bp sequence in the Yp1 gene. Site-specific DNA binding to 31 bp P element inverted repeats. This chain is ATP-dependent DNA helicase 2 subunit 1 (Irbp), found in Drosophila melanogaster (Fruit fly).